Consider the following 395-residue polypeptide: MATVDRWLLPDGIEEVLPPEAACIEVARRQVLDLFQSWGYEFVVTPHIEYLESLLTGAGSDLDLRTFKVIDPQSGRQMGFRADITPQVARIDAHTLKREGPSRLCYAGSVLHAQPRALSSSRSPIQLGAELYGDASPSSDVEVISLMLAMLQLADVPDVHMDLGHVGIYRGLARAAGLSGEVEQQLFDALQRKAIDEVVALTADLPQELASMLRALVDLCGGREVLDAARDRLAGAPAPVLAALNDLLAIAERLAARFPQLPLYFDLGELRGYHYHTGVVFAVFVPGVGQSIAQGGRYDDIGADFGRARPATGFSTDLKTLVTLGQAEIVLPSGGIWVPDSTDAALWQQVCQLRSEGQRVVQALPGQQASAAREADCDRQLIQHGEHWQVMPLAS.

The protein belongs to the class-II aminoacyl-tRNA synthetase family. HisZ subfamily. In terms of assembly, heteromultimer composed of HisG and HisZ subunits.

The protein resides in the cytoplasm. It functions in the pathway amino-acid biosynthesis; L-histidine biosynthesis; L-histidine from 5-phospho-alpha-D-ribose 1-diphosphate: step 1/9. In terms of biological role, required for the first step of histidine biosynthesis. May allow the feedback regulation of ATP phosphoribosyltransferase activity by histidine. This chain is ATP phosphoribosyltransferase regulatory subunit, found in Pseudomonas savastanoi pv. phaseolicola (strain 1448A / Race 6) (Pseudomonas syringae pv. phaseolicola (strain 1448A / Race 6)).